A 250-amino-acid chain; its full sequence is Small ribosomal subunit protein uS2 (250 aa).

Belongs to the universal ribosomal protein uS2 family.

The protein is Small ribosomal subunit protein uS2 of Albidiferax ferrireducens (strain ATCC BAA-621 / DSM 15236 / T118) (Rhodoferax ferrireducens).